The following is a 386-amino-acid chain: MVMMLKKTVKKGLIGGMSFAKDAGKINWFPGHMAAATRAIRNRLKLSDLVIEVRDARIPLSSANEDLQSQMSAKRRIIALNKKDLANPNVLNKWTRHFESSKQDCIAINAHSRSSVMKLLDLVELKLKEVIAREPTLLVMVVGVPNVGKSALINSIHQIAAARFPVQERLKRATVGPLPGVTQDIAGFKIAHRPSIYVLDSPGVLVPSIPDIETGLKLALSGSVKDSVVGEERIAQYFLAILNIRGTPLHWKYLVEGINEGPHADCIDKPSYNLKDLRHQRTKQPDSSALHYVGDMISEVQRSLYITLSEFDGDTEDENDLECLIEQQFEVLQKALKIPHKASEARLMVSKKFLTLFRTGRLGPFILDDVPETETDHPNSKRVVVL.

In terms of domain architecture, CP-type G spans threonine 37–proline 207. Residues aspartate 55–proline 59 carry the DARXP motif motif. The tract at residues asparagine 81–aspartate 84 is G4. GTP-binding positions include asparagine 81–aspartate 84, asparagine 109–alanine 110, and asparagine 146–alanine 151. The interval asparagine 109 to histidine 111 is G5. The interval glycine 143 to serine 150 is G1. Positions glycine 180–aspartate 184 are G2. The interval aspartate 200 to glycine 203 is G3. Residue glycine 203 coordinates GTP.

Belongs to the TRAFAC class YlqF/YawG GTPase family. MTG1 subfamily. As to expression, expressed in seedlings, roots, leaves, stems, inflorescences and siliques.

It is found in the mitochondrion. Its function is as follows. GTPase that may function in mitochondrial ribosome assembly. Involved in a variety of growth processes during vegetative development and promotes growth and cell division in the developing integuments. In Arabidopsis thaliana (Mouse-ear cress), this protein is Short integuments 2, mitochondrial.